Consider the following 151-residue polypeptide: Probable transport accessory protein MmpS1 (151 aa).

A run of 2 helical transmembrane segments spans residues 8 to 28 (FWIP…VSRL) and 81 to 101 (VVNA…AVVA).

The protein belongs to the MmpS family.

The protein localises to the cell membrane. The chain is Probable transport accessory protein MmpS1 (mmpS1) from Mycobacterium tuberculosis (strain CDC 1551 / Oshkosh).